The primary structure comprises 623 residues: Glutathione import ATP-binding protein GsiA (623 aa).

ABC transporter domains are found at residues 15 to 269 (VSGL…QTLL) and 325 to 564 (LRSG…RKLM). ATP contacts are provided by residues 49 to 56 (GESGSGKS) and 357 to 364 (GESGSGKS).

Belongs to the ABC transporter superfamily. Glutathione importer (TC 3.A.1.5.11) family. The complex is composed of two ATP-binding proteins (GsiA), two transmembrane proteins (GsiC and GsiD) and a solute-binding protein (GsiB).

It localises to the cell inner membrane. The enzyme catalyses glutathione(out) + ATP + H2O = glutathione(in) + ADP + phosphate + H(+). Part of the ABC transporter complex GsiABCD involved in glutathione import. Responsible for energy coupling to the transport system. This chain is Glutathione import ATP-binding protein GsiA, found in Salmonella typhimurium (strain LT2 / SGSC1412 / ATCC 700720).